A 428-amino-acid polypeptide reads, in one-letter code: Dihydroorotase (428 aa).

Zn(2+)-binding residues include H59 and H61. Substrate is bound by residues 61–63 and N93; that span reads HLR. Zn(2+) contacts are provided by D151, H178, and H231. Substrate is bound at residue N277. D304 is a Zn(2+) binding site. D304 is a catalytic residue. Substrate is bound by residues H308 and 322 to 323; that span reads FG.

Belongs to the metallo-dependent hydrolases superfamily. DHOase family. Class I DHOase subfamily. Zn(2+) serves as cofactor.

It carries out the reaction (S)-dihydroorotate + H2O = N-carbamoyl-L-aspartate + H(+). It participates in pyrimidine metabolism; UMP biosynthesis via de novo pathway; (S)-dihydroorotate from bicarbonate: step 3/3. Its function is as follows. Catalyzes the reversible cyclization of carbamoyl aspartate to dihydroorotate. The sequence is that of Dihydroorotase from Bacillus pumilus (strain SAFR-032).